The sequence spans 372 residues: Maltose/maltodextrin import ATP-binding protein MalK (372 aa).

Positions 4 to 234 (VTLKNVCKAY…PQNRFVAGFI (231 aa)) constitute an ABC transporter domain. 36 to 43 (GPSGCGKS) provides a ligand contact to ATP.

Belongs to the ABC transporter superfamily. Maltooligosaccharide importer (TC 3.A.1.1.1) family. As to quaternary structure, the complex is composed of two ATP-binding proteins (MalK), two transmembrane proteins (MalG and MalK) and a solute-binding protein (MalE).

Its subcellular location is the cell inner membrane. It catalyses the reaction D-maltose(out) + ATP + H2O = D-maltose(in) + ADP + phosphate + H(+). Its function is as follows. Part of the ABC transporter complex MalEFGK involved in maltose/maltodextrin import. Responsible for energy coupling to the transport system. This Vibrio parahaemolyticus serotype O3:K6 (strain RIMD 2210633) protein is Maltose/maltodextrin import ATP-binding protein MalK.